The sequence spans 209 residues: Small ribosomal subunit protein uS4 (209 aa).

Basic residues predominate over residues 1-13 (MSTKSRTRSKTRL). Disordered regions lie at residues 1–20 (MSTK…LGIP) and 28–49 (YLEK…QDSD). The S4 RNA-binding domain occupies 95–160 (QRLDALVVRS…TEPFQVAAAG (66 aa)).

The protein belongs to the universal ribosomal protein uS4 family. Part of the 30S ribosomal subunit. Contacts protein S5. The interaction surface between S4 and S5 is involved in control of translational fidelity.

Its function is as follows. One of the primary rRNA binding proteins, it binds directly to 16S rRNA where it nucleates assembly of the body of the 30S subunit. With S5 and S12 plays an important role in translational accuracy. The polypeptide is Small ribosomal subunit protein uS4 (Clavibacter sepedonicus (Clavibacter michiganensis subsp. sepedonicus)).